The chain runs to 302 residues: N-acetylmuramic acid 6-phosphate etherase (302 aa).

The 164-residue stretch at 57-220 (IADRFRSNGR…TTGAMIRIGK (164 aa)) folds into the SIS domain. Glutamate 85 serves as the catalytic Proton donor. Glutamate 116 is a catalytic residue.

It belongs to the GCKR-like family. MurNAc-6-P etherase subfamily. Homodimer.

The catalysed reaction is N-acetyl-D-muramate 6-phosphate + H2O = N-acetyl-D-glucosamine 6-phosphate + (R)-lactate. The protein operates within amino-sugar metabolism; N-acetylmuramate degradation. Functionally, specifically catalyzes the cleavage of the D-lactyl ether substituent of MurNAc 6-phosphate, producing GlcNAc 6-phosphate and D-lactate. This chain is N-acetylmuramic acid 6-phosphate etherase, found in Rhodopirellula baltica (strain DSM 10527 / NCIMB 13988 / SH1).